Here is a 316-residue protein sequence, read N- to C-terminus: 4-hydroxy-3-methylbut-2-enyl diphosphate reductase (316 aa).

Cys-12 is a binding site for [4Fe-4S] cluster. Positions 41 and 74 each coordinate (2E)-4-hydroxy-3-methylbut-2-enyl diphosphate. Residues His-41 and His-74 each coordinate dimethylallyl diphosphate. Isopentenyl diphosphate-binding residues include His-41 and His-74. Cys-96 lines the [4Fe-4S] cluster pocket. Residue His-124 participates in (2E)-4-hydroxy-3-methylbut-2-enyl diphosphate binding. Residue His-124 coordinates dimethylallyl diphosphate. Residue His-124 coordinates isopentenyl diphosphate. Glu-126 acts as the Proton donor in catalysis. Thr-169 serves as a coordination point for (2E)-4-hydroxy-3-methylbut-2-enyl diphosphate. Cys-199 contributes to the [4Fe-4S] cluster binding site. Positions 227, 228, 229, and 271 each coordinate (2E)-4-hydroxy-3-methylbut-2-enyl diphosphate. Residues Ser-227, Ser-228, Asn-229, and Ser-271 each coordinate dimethylallyl diphosphate. Positions 227, 228, 229, and 271 each coordinate isopentenyl diphosphate.

The protein belongs to the IspH family. [4Fe-4S] cluster serves as cofactor.

It catalyses the reaction isopentenyl diphosphate + 2 oxidized [2Fe-2S]-[ferredoxin] + H2O = (2E)-4-hydroxy-3-methylbut-2-enyl diphosphate + 2 reduced [2Fe-2S]-[ferredoxin] + 2 H(+). The enzyme catalyses dimethylallyl diphosphate + 2 oxidized [2Fe-2S]-[ferredoxin] + H2O = (2E)-4-hydroxy-3-methylbut-2-enyl diphosphate + 2 reduced [2Fe-2S]-[ferredoxin] + 2 H(+). It functions in the pathway isoprenoid biosynthesis; dimethylallyl diphosphate biosynthesis; dimethylallyl diphosphate from (2E)-4-hydroxy-3-methylbutenyl diphosphate: step 1/1. Its pathway is isoprenoid biosynthesis; isopentenyl diphosphate biosynthesis via DXP pathway; isopentenyl diphosphate from 1-deoxy-D-xylulose 5-phosphate: step 6/6. Its function is as follows. Catalyzes the conversion of 1-hydroxy-2-methyl-2-(E)-butenyl 4-diphosphate (HMBPP) into a mixture of isopentenyl diphosphate (IPP) and dimethylallyl diphosphate (DMAPP). Acts in the terminal step of the DOXP/MEP pathway for isoprenoid precursor biosynthesis. This chain is 4-hydroxy-3-methylbut-2-enyl diphosphate reductase, found in Vibrio cholerae serotype O1 (strain ATCC 39315 / El Tor Inaba N16961).